The following is a 229-amino-acid chain: Large ribosomal subunit protein uL1 (229 aa).

Belongs to the universal ribosomal protein uL1 family. As to quaternary structure, part of the 50S ribosomal subunit.

Functionally, binds directly to 23S rRNA. The L1 stalk is quite mobile in the ribosome, and is involved in E site tRNA release. In terms of biological role, protein L1 is also a translational repressor protein, it controls the translation of the L11 operon by binding to its mRNA. In Bifidobacterium animalis subsp. lactis (strain AD011), this protein is Large ribosomal subunit protein uL1.